The primary structure comprises 310 residues: Dermonecrotic toxin LiSicTox-alphaII2 (310 aa).

An N-terminal signal peptide occupies residues Met-1–Gly-18. Residues Ala-19–Arg-26 constitute a propeptide that is removed on maturation. His-38 is a catalytic residue. The Mg(2+) site is built by Glu-58 and Asp-60. His-74 functions as the Nucleophile in the catalytic mechanism. Cystine bridges form between Cys-78–Cys-84 and Cys-80–Cys-224. The N-linked (GlcNAc...) asparagine glycan is linked to Asn-99. Asp-118 provides a ligand contact to Mg(2+).

Belongs to the arthropod phospholipase D family. Class II subfamily. Mg(2+) is required as a cofactor. As to expression, expressed by the venom gland.

It localises to the secreted. It carries out the reaction an N-(acyl)-sphingosylphosphocholine = an N-(acyl)-sphingosyl-1,3-cyclic phosphate + choline. The enzyme catalyses an N-(acyl)-sphingosylphosphoethanolamine = an N-(acyl)-sphingosyl-1,3-cyclic phosphate + ethanolamine. It catalyses the reaction a 1-acyl-sn-glycero-3-phosphocholine = a 1-acyl-sn-glycero-2,3-cyclic phosphate + choline. The catalysed reaction is a 1-acyl-sn-glycero-3-phosphoethanolamine = a 1-acyl-sn-glycero-2,3-cyclic phosphate + ethanolamine. In terms of biological role, dermonecrotic toxins cleave the phosphodiester linkage between the phosphate and headgroup of certain phospholipids (sphingolipid and lysolipid substrates), forming an alcohol (often choline) and a cyclic phosphate. This toxin acts on sphingomyelin (SM). It may also act on ceramide phosphoethanolamine (CPE), lysophosphatidylcholine (LPC) and lysophosphatidylethanolamine (LPE), but not on lysophosphatidylserine (LPS), and lysophosphatidylglycerol (LPG). It acts by transphosphatidylation, releasing exclusively cyclic phosphate products as second products. Induces dermonecrosis, hemolysis, increased vascular permeability, edema, inflammatory response, and platelet aggregation. In Loxosceles intermedia (Brown spider), this protein is Dermonecrotic toxin LiSicTox-alphaII2.